Here is a 477-residue protein sequence, read N- to C-terminus: Ribulose bisphosphate carboxylase large chain (477 aa).

Residues 1-2 constitute a propeptide that is removed on maturation; the sequence is MS. The residue at position 3 (proline 3) is an N-acetylproline. An N6,N6,N6-trimethyllysine modification is found at lysine 14. Substrate-binding residues include asparagine 123 and threonine 173. The active-site Proton acceptor is the lysine 175. Lysine 177 provides a ligand contact to substrate. Lysine 201, aspartate 203, and glutamate 204 together coordinate Mg(2+). An N6-carboxylysine modification is found at lysine 201. Histidine 294 serves as the catalytic Proton acceptor. Residues arginine 295, histidine 327, and serine 379 each coordinate substrate.

It belongs to the RuBisCO large chain family. Type I subfamily. As to quaternary structure, heterohexadecamer of 8 large chains and 8 small chains; disulfide-linked. The disulfide link is formed within the large subunit homodimers. The cofactor is Mg(2+). The disulfide bond which can form in the large chain dimeric partners within the hexadecamer appears to be associated with oxidative stress and protein turnover.

It is found in the plastid. It localises to the chloroplast. It carries out the reaction 2 (2R)-3-phosphoglycerate + 2 H(+) = D-ribulose 1,5-bisphosphate + CO2 + H2O. The catalysed reaction is D-ribulose 1,5-bisphosphate + O2 = 2-phosphoglycolate + (2R)-3-phosphoglycerate + 2 H(+). RuBisCO catalyzes two reactions: the carboxylation of D-ribulose 1,5-bisphosphate, the primary event in carbon dioxide fixation, as well as the oxidative fragmentation of the pentose substrate in the photorespiration process. Both reactions occur simultaneously and in competition at the same active site. In Cichorium intybus (Chicory), this protein is Ribulose bisphosphate carboxylase large chain.